We begin with the raw amino-acid sequence, 451 residues long: Target of rapamycin complex 1 subunit tco89 (451 aa).

Positions 1–35 (MERPSLSRRTSSSTVSTDGEGVYSRSTKERKRNFI) are disordered. Residues 7 to 17 (SRRTSSSTVST) show a composition bias toward low complexity. Phosphoserine is present on serine 70. Disordered regions lie at residues 122–164 (WDDA…PVTR), 176–264 (INSN…GNSL), and 362–437 (NQNF…DTDY). A compositionally biased stretch (polar residues) spans 129–162 (NDSTAGNLDSDSALPTPSVTTNEAADSSRASSPV). A compositionally biased stretch (low complexity) spans 203-215 (DDSAADASTTKSS). Polar residues-rich tracts occupy residues 228–242 (HSNNREVTQATNQPK), 362–376 (NQNFDSQNAFNTSAA), and 407–417 (QSASLNASMSA). Positions 419-430 (SHARQRSIHVPK) are enriched in basic residues.

It belongs to the TORC subunit TCO89 family. In terms of assembly, the target of rapamycin complex 1 (TORC1) is composed of at least mip1, pop3/wat1, tco89, toc1 and tor2. Either Thr-10, Ser-11, Ser-12, Ser-13 or Thr-14 and Ser-214 or Ser-215 and Ser-247 or Ser-249 are phosphorylated as well.

Its subcellular location is the cytoplasm. Functionally, component of TORC1, which regulates multiple cellular processes to control cell growth in response to environmental signals. Tor2 is essential for growth. Nutrient limitation and environmental stress signals cause inactivation of TORC1. Active TORC1 positively controls cell growth and ribosome biogenesis by regulating ribosomal protein gene expression. TORC1 negatively controls G1 cell-cycle arrest, sexual development and amino acid uptake. Represses mating, meiosis and sporulation efficiency by interfering with the functions of the transcription factor ste11 and the meiosis-promoting RNA-binding protein mei2. The protein is Target of rapamycin complex 1 subunit tco89 of Schizosaccharomyces pombe (strain 972 / ATCC 24843) (Fission yeast).